The chain runs to 515 residues: MATTLNPSEISDLIKTRIEAVKLSAESRNEGSVTSVSDGIVRIFGLADVMQGEMIELPNNTFALALNLERDSVGAVVLGDYESLREGDVAKTTGRILEVPVGPELLGRVVNALGEPIDGKGPLGATQTAPVERVAPGVIWRKSVDQPVQTGYKSVDAMIPIGRGQRELVIGDRQTGKTALAIDAVINQKGTGIKCVYVAIGQKASTVANIVRKLEENGALAHTVVVAATASESAAMQYISPYAGCTMGEYFMDRGEDALIVYDDLSKQAVAYRQISLLLKRPPGREAYPGDVFYLHSRLLERAARVSEEYVEKFTNGAVTGKTGSLTALPIIETQAGDVSAFVPTNVISITDGQIFLETDLFNAGIRPAVNAGISVSRVGGAAQTKIIKKLSGGIRISLAQYRELAAFAQFASDLDEATRKQLERGQRVTELMKQKQYAPMSIANQALSIYAVNEGYLDDVPVNKLLAFEEGLHAHFANTQGELVSKINSTGGWDNDIEASFKKGIEEFKTTGSW.

Residue 171–178 (GDRQTGKT) coordinates ATP.

It belongs to the ATPase alpha/beta chains family. F-type ATPases have 2 components, CF(1) - the catalytic core - and CF(0) - the membrane proton channel. CF(1) has five subunits: alpha(3), beta(3), gamma(1), delta(1), epsilon(1). CF(0) has three main subunits: a(1), b(2) and c(9-12). The alpha and beta chains form an alternating ring which encloses part of the gamma chain. CF(1) is attached to CF(0) by a central stalk formed by the gamma and epsilon chains, while a peripheral stalk is formed by the delta and b chains.

The protein localises to the cell inner membrane. It catalyses the reaction ATP + H2O + 4 H(+)(in) = ADP + phosphate + 5 H(+)(out). In terms of biological role, produces ATP from ADP in the presence of a proton gradient across the membrane. The alpha chain is a regulatory subunit. In Xanthomonas axonopodis pv. citri (strain 306), this protein is ATP synthase subunit alpha.